A 336-amino-acid chain; its full sequence is Anthranilate phosphoribosyltransferase (336 aa).

Residues Gly79, 82–83 (GD), Thr87, 89–92 (NIST), 107–115 (KHGNRAMSS), and Ser119 contribute to the 5-phospho-alpha-D-ribose 1-diphosphate site. Gly79 is an anthranilate binding site. A Mg(2+)-binding site is contributed by Ser91. Asn110 lines the anthranilate pocket. Arg165 contacts anthranilate. Positions 225 and 226 each coordinate Mg(2+).

This sequence belongs to the anthranilate phosphoribosyltransferase family. In terms of assembly, homodimer. Mg(2+) is required as a cofactor.

The catalysed reaction is N-(5-phospho-beta-D-ribosyl)anthranilate + diphosphate = 5-phospho-alpha-D-ribose 1-diphosphate + anthranilate. It functions in the pathway amino-acid biosynthesis; L-tryptophan biosynthesis; L-tryptophan from chorismate: step 2/5. Catalyzes the transfer of the phosphoribosyl group of 5-phosphorylribose-1-pyrophosphate (PRPP) to anthranilate to yield N-(5'-phosphoribosyl)-anthranilate (PRA). This Dictyoglomus thermophilum (strain ATCC 35947 / DSM 3960 / H-6-12) protein is Anthranilate phosphoribosyltransferase.